A 274-amino-acid chain; its full sequence is tRNA (guanine-N(1)-)-methyltransferase (274 aa).

S-adenosyl-L-methionine-binding positions include glycine 116 and 140–145; that span reads LGDYVL.

The protein belongs to the RNA methyltransferase TrmD family. In terms of assembly, homodimer.

The protein resides in the cytoplasm. The catalysed reaction is guanosine(37) in tRNA + S-adenosyl-L-methionine = N(1)-methylguanosine(37) in tRNA + S-adenosyl-L-homocysteine + H(+). In terms of biological role, specifically methylates guanosine-37 in various tRNAs. This chain is tRNA (guanine-N(1)-)-methyltransferase, found in Arthrobacter sp. (strain FB24).